A 172-amino-acid chain; its full sequence is Immune protein Tsi1 (172 aa).

A signal peptide spans 1 to 19 (MKLLAGSFAALFLSLSAQA). 3 cysteine pairs are disulfide-bonded: C22-C167, C79-C121, and C147-C155.

Forms a heterotetramer with Tse1 consisting of two Tse1 dimers and two Tsi1 dimers. Formation of the complex inactivates Tse1 enzymatic activity.

Its function is as follows. Immunity protein that plays a role in preventing early activation of toxin Tse1. Binds to a large surface of Tse1 and thereby occludes the active site to specifically inhibits enzyme activity by forming a hydrogen bond with the catalytic diad. The polypeptide is Immune protein Tsi1 (Pseudomonas aeruginosa (strain ATCC 15692 / DSM 22644 / CIP 104116 / JCM 14847 / LMG 12228 / 1C / PRS 101 / PAO1)).